The following is a 50-amino-acid chain: Large ribosomal subunit protein bL33 (50 aa).

It belongs to the bacterial ribosomal protein bL33 family.

This chain is Large ribosomal subunit protein bL33, found in Sulfurovum sp. (strain NBC37-1).